The primary structure comprises 372 residues: tRNA-specific 2-thiouridylase MnmA (372 aa).

ATP-binding positions include 11–18 (GMSGGVDS) and Met37. Residues 97 to 99 (NPD) form an interaction with target base in tRNA region. Residue Cys102 is the Nucleophile of the active site. Cys102 and Cys199 are disulfide-bonded. Residue Gly126 coordinates ATP. The tract at residues 149–151 (KDQ) is interaction with tRNA. The active-site Cysteine persulfide intermediate is the Cys199. Residues 309–310 (RY) are interaction with tRNA.

It belongs to the MnmA/TRMU family.

Its subcellular location is the cytoplasm. The enzyme catalyses S-sulfanyl-L-cysteinyl-[protein] + uridine(34) in tRNA + AH2 + ATP = 2-thiouridine(34) in tRNA + L-cysteinyl-[protein] + A + AMP + diphosphate + H(+). Its function is as follows. Catalyzes the 2-thiolation of uridine at the wobble position (U34) of tRNA, leading to the formation of s(2)U34. This Staphylococcus aureus (strain Mu50 / ATCC 700699) protein is tRNA-specific 2-thiouridylase MnmA.